Consider the following 315-residue polypeptide: Small ribosomal subunit protein uS9m (315 aa).

A mitochondrion-targeting transit peptide spans M1–S42. The interval P293–R315 is disordered. Residues V296–R315 are compositionally biased toward basic residues.

The protein belongs to the universal ribosomal protein uS9 family. As to quaternary structure, component of the mitochondrial small ribosomal subunit (mt-SSU). Mature N.crassa 74S mitochondrial ribosomes consist of a small (37S) and a large (54S) subunit. The 37S small subunit contains a 16S ribosomal RNA (16S mt-rRNA) and 32 different proteins. The 54S large subunit contains a 23S rRNA (23S mt-rRNA) and 42 different proteins.

It is found in the mitochondrion. Component of the mitochondrial ribosome (mitoribosome), a dedicated translation machinery responsible for the synthesis of mitochondrial genome-encoded proteins, including at least some of the essential transmembrane subunits of the mitochondrial respiratory chain. The mitoribosomes are attached to the mitochondrial inner membrane and translation products are cotranslationally integrated into the membrane. This chain is Small ribosomal subunit protein uS9m (mrp-9), found in Neurospora crassa (strain ATCC 24698 / 74-OR23-1A / CBS 708.71 / DSM 1257 / FGSC 987).